The sequence spans 217 residues: Protein-methionine-sulfoxide reductase heme-binding subunit MsrQ (217 aa).

The next 4 membrane-spanning stretches (helical) occupy residues 82 to 102 (MLGL…LLVD), 118 to 138 (PFIT…ATST), 150 to 170 (WQWL…HYWW), and 180 to 200 (EVSI…WWVW).

The protein belongs to the MsrQ family. As to quaternary structure, heterodimer of a catalytic subunit (MsrP) and a heme-binding subunit (MsrQ). The cofactor is FMN. Requires heme b as cofactor.

The protein localises to the cell inner membrane. In terms of biological role, part of the MsrPQ system that repairs oxidized periplasmic proteins containing methionine sulfoxide residues (Met-O), using respiratory chain electrons. Thus protects these proteins from oxidative-stress damage caused by reactive species of oxygen and chlorine generated by the host defense mechanisms. MsrPQ is essential for the maintenance of envelope integrity under bleach stress, rescuing a wide series of structurally unrelated periplasmic proteins from methionine oxidation. MsrQ provides electrons for reduction to the reductase catalytic subunit MsrP, using the quinone pool of the respiratory chain. The polypeptide is Protein-methionine-sulfoxide reductase heme-binding subunit MsrQ (Ralstonia nicotianae (strain ATCC BAA-1114 / GMI1000) (Ralstonia solanacearum)).